The primary structure comprises 919 residues: Transcriptional regulatory protein EDS1 (919 aa).

Residues 1-54 (MSHHVPNLYGTPIRDPHEHKRNSASMGEVNQSVSSRNCERGSEKGTKQRKKASR) form a disordered region. The segment covering 23–36 (SASMGEVNQSVSSR) has biased composition (polar residues). The span at 37–46 (NCERGSEKGT) shows a compositional bias: basic and acidic residues. Positions 56–85 (CDQCRRKRIKCRFDKHTGVCQGCLEVGEKC) form a DNA-binding region, zn(2)-C6 fungal-type. The interval 297–338 (AGCPNKKLGTDGRSDKWDKNSTWKPVYRSSNPSHPSTEKNVS) is disordered. Basic and acidic residues predominate over residues 304–317 (LGTDGRSDKWDKNS). The span at 318-338 (TWKPVYRSSNPSHPSTEKNVS) shows a compositional bias: polar residues.

In terms of assembly, binds DNA in a sequence-specific manner.

The protein resides in the nucleus. This Saccharomyces cerevisiae (strain Lalvin EC1118 / Prise de mousse) (Baker's yeast) protein is Transcriptional regulatory protein EDS1 (EDS1).